A 152-amino-acid polypeptide reads, in one-letter code: Putative rho GDP-dissociation inhibitor 2 (152 aa).

Belongs to the Rho GDI family.

Its subcellular location is the cytoplasm. Functionally, regulates the GDP/GTP exchange reaction of the Rho proteins by inhibiting the dissociation of GDP from them, and the subsequent binding of GTP to them. The protein is Putative rho GDP-dissociation inhibitor 2 (rdiB) of Dictyostelium discoideum (Social amoeba).